A 510-amino-acid chain; its full sequence is NAD(P)H-quinone oxidoreductase subunit 2 A, chloroplastic (510 aa).

A run of 13 helical transmembrane segments spans residues L24–L44, W59–W79, I99–I119, M124–C144, L149–Y169, Y183–G203, I229–F249, W295–I315, M323–D343, G347–A367, A395–F415, L418–L438, and M484–I504.

This sequence belongs to the complex I subunit 2 family. In terms of assembly, NDH is composed of at least 16 different subunits, 5 of which are encoded in the nucleus.

The protein resides in the plastid. It is found in the chloroplast thylakoid membrane. It catalyses the reaction a plastoquinone + NADH + (n+1) H(+)(in) = a plastoquinol + NAD(+) + n H(+)(out). The enzyme catalyses a plastoquinone + NADPH + (n+1) H(+)(in) = a plastoquinol + NADP(+) + n H(+)(out). In terms of biological role, NDH shuttles electrons from NAD(P)H:plastoquinone, via FMN and iron-sulfur (Fe-S) centers, to quinones in the photosynthetic chain and possibly in a chloroplast respiratory chain. The immediate electron acceptor for the enzyme in this species is believed to be plastoquinone. Couples the redox reaction to proton translocation, and thus conserves the redox energy in a proton gradient. In Amborella trichopoda, this protein is NAD(P)H-quinone oxidoreductase subunit 2 A, chloroplastic.